The sequence spans 628 residues: tRNA uridine 5-carboxymethylaminomethyl modification enzyme MnmG (628 aa).

14 to 19 (GAGHAG) is a binding site for FAD. Residue 273-287 (GPRYCPSIEDKVVRF) participates in NAD(+) binding.

It belongs to the MnmG family. As to quaternary structure, homodimer. Heterotetramer of two MnmE and two MnmG subunits. FAD serves as cofactor.

The protein resides in the cytoplasm. In terms of biological role, NAD-binding protein involved in the addition of a carboxymethylaminomethyl (cmnm) group at the wobble position (U34) of certain tRNAs, forming tRNA-cmnm(5)s(2)U34. This Bacillus velezensis (strain DSM 23117 / BGSC 10A6 / LMG 26770 / FZB42) (Bacillus amyloliquefaciens subsp. plantarum) protein is tRNA uridine 5-carboxymethylaminomethyl modification enzyme MnmG.